Reading from the N-terminus, the 346-residue chain is MAMVSEFLKQAWFIDNEEQEYIKTVKGSKGGPGSAVSPYPTFNPSSDVEASHKAITVKGVDEATIIEIHTKRTNAQRQQIKAAYLQEKGKPLDEALKKALTGHLEEVALALLKTPAQFDADELRAAMKGLGTDEDTLNEILASRTNREIREINRVYKEELKRDLAKDITSDTSGDYQKALLSLAKGDRSEDLAINDDLADTDARALYEAGERRKGTDLNVFITILTTRSYLHLRRVFQKYSKYSKHDMNKVLDLELKGDIENCLTVVVKCATSKPMFFAEKLHQAMKGNGTRHKTLIRIMVSRSEIDMNDIKACYQKLYGISLCQAILDETKGDYEKILVALCGGD.

Residue A2 is modified to N-acetylalanine. Residue S5 is modified to Phosphoserine; by TRPM7. Residue Q19 forms an Isoglutamyl lysine isopeptide (Gln-Lys) (interchain with K-?) linkage. Residue Y21 is modified to Phosphotyrosine; by EGFR. The segment at 25 to 47 is disordered; the sequence is VKGSKGGPGSAVSPYPTFNPSSD. Residues S34 and S37 each carry the phosphoserine modification. Position 41 is a phosphothreonine (T41). Annexin repeat units follow at residues 42–113, 114–185, 197–269, and 273–344; these read FNPS…ALLK, TPAQ…SLAK, DLAD…VVVK, and SKPM…ALCG. An N6-acetyllysine modification is found at K58. Residues G59, V60, E62, K97, L100, E105, M127, G129, G131, T132, and E134 each contribute to the Ca(2+) site. Phosphothreonine is present on T136. Ca(2+) is bound by residues D171, G210, and R213. K214 is covalently cross-linked (Glycyl lysine isopeptide (Lys-Gly) (interchain with G-Cter in SUMO1); alternate). A Glycyl lysine isopeptide (Lys-Gly) (interchain with G-Cter in SUMO2); alternate cross-link involves residue K214. Residue G215 coordinates Ca(2+). K239 is modified (N6-acetyllysine). Residues D253, E255, and L256 each contribute to the Ca(2+) site. A Glycyl lysine isopeptide (Lys-Gly) (interchain with G-Cter in SUMO1) cross-link involves residue K257. Positions 261, 286, 288, and 290 each coordinate Ca(2+). At K312 the chain carries N6-acetyllysine. C324 and C343 are oxidised to a cystine. Positions 328, 330, and 331 each coordinate Ca(2+). K332 is covalently cross-linked (Glycyl lysine isopeptide (Lys-Gly) (interchain with G-Cter in SUMO1)). Residue E336 participates in Ca(2+) binding.

The protein belongs to the annexin family. As to quaternary structure, homodimer; non-covalently linked. Homodimer; linked by transglutamylation. Homodimers linked by transglutamylation are observed in placenta, but not in other tissues. Interacts with S100A11. Heterotetramer, formed by two molecules each of S100A11 and ANXA1. Interacts with DYSF. Interacts with EGFR. Phosphorylated by EGFR. Phosphorylated by protein kinase C and TRPM7. Phosphorylated in response to EGF treatment. Post-translationally, sumoylated. In terms of processing, proteolytically cleaved by cathepsin CTSG to release the active N-terminal peptide Ac2-26. As to expression, detected in lung and spleen (at protein level).

The protein resides in the nucleus. It localises to the cytoplasm. The protein localises to the cell projection. It is found in the cilium. Its subcellular location is the basolateral cell membrane. The protein resides in the lateral cell membrane. It localises to the early endosome. The protein localises to the cell membrane. It is found in the cytoplasmic vesicle membrane. Its subcellular location is the apical cell membrane. The protein resides in the membrane. It localises to the endosome. The protein localises to the secreted. It is found in the extracellular space. Its subcellular location is the extracellular exosome. The protein resides in the cytoplasmic vesicle. It localises to the secretory vesicle lumen. The protein localises to the phagocytic cup. Its function is as follows. Plays important roles in the innate immune response as effector of glucocorticoid-mediated responses and regulator of the inflammatory process. Has anti-inflammatory activity. Plays a role in glucocorticoid-mediated down-regulation of the early phase of the inflammatory response. Contributes to the adaptive immune response by enhancing signaling cascades that are triggered by T-cell activation, regulates differentiation and proliferation of activated T-cells. Promotes the differentiation of T-cells into Th1 cells and negatively regulates differentiation into Th2 cells. Has no effect on unstimulated T-cells. Negatively regulates hormone exocytosis via activation of the formyl peptide receptors and reorganization of the actin cytoskeleton. Has high affinity for Ca(2+) and can bind up to eight Ca(2+) ions. Displays Ca(2+)-dependent binding to phospholipid membranes. Plays a role in the formation of phagocytic cups and phagosomes. Plays a role in phagocytosis by mediating the Ca(2+)-dependent interaction between phagosomes and the actin cytoskeleton. In terms of biological role, functions at least in part by activating the formyl peptide receptors and downstream signaling cascades. Promotes chemotaxis of granulocytes and monocytes via activation of the formyl peptide receptors. Promotes rearrangement of the actin cytoskeleton, cell polarization and cell migration. Promotes resolution of inflammation and wound healing. Acts via neutrophil N-formyl peptide receptors to enhance the release of CXCL2. This Sus scrofa (Pig) protein is Annexin A1 (ANXA1).